A 323-amino-acid chain; its full sequence is MNYYDALYPQLVAMGQERWAAQLQSTLSKQLLLERYGDMPEWLSALEALPQIQPSCIDLQDSVTIGSGSDLGRISSEELITLLQAFHPWRKGPYSLFGVEIETEWRSDWKWDRLLPHIQPLAGRRVLDVGCGNGYHGWRMRGVGADFVLGIEPFLVSVMQFQVMQRYLRDPQHQVIPIGVEDLPANLACFDSVFSMGVLYHRRSPLDHILELKGCLRPGGQLILETLIVEGDQETVFMPPGRYAKMRNVWFLPSIPAMTLWLQRCGFTEIACVNTNRTSHGEQHATDWMRFESLADYLDPDDESKTIEGHPAPLRAIFIATRP.

Residues Lys-91, Trp-105, Lys-110, Gly-130, 180–181 (VE), Met-196, Tyr-200, and Arg-315 contribute to the carboxy-S-adenosyl-L-methionine site.

It belongs to the class I-like SAM-binding methyltransferase superfamily. CmoB family. Homotetramer.

It carries out the reaction carboxy-S-adenosyl-L-methionine + 5-hydroxyuridine(34) in tRNA = 5-carboxymethoxyuridine(34) in tRNA + S-adenosyl-L-homocysteine + H(+). Functionally, catalyzes carboxymethyl transfer from carboxy-S-adenosyl-L-methionine (Cx-SAM) to 5-hydroxyuridine (ho5U) to form 5-carboxymethoxyuridine (cmo5U) at position 34 in tRNAs. The polypeptide is tRNA U34 carboxymethyltransferase (Trichlorobacter lovleyi (strain ATCC BAA-1151 / DSM 17278 / SZ) (Geobacter lovleyi)).